Consider the following 431-residue polypeptide: Adenylosuccinate synthetase (431 aa).

Residues 12–18 (GDEGKGK) and 40–42 (GHT) contribute to the GTP site. Asp13 (proton acceptor) is an active-site residue. Asp13 and Gly40 together coordinate Mg(2+). Residues 13–16 (DEGK), 38–41 (NAGH), Thr128, Arg142, Gln225, Thr240, and Arg304 each bind IMP. The Proton donor role is filled by His41. Substrate is bound at residue 300–306 (TTTGRPR). Residues Arg306, 332 to 334 (KLD), and 414 to 416 (GVG) contribute to the GTP site.

It belongs to the adenylosuccinate synthetase family. In terms of assembly, homodimer. Mg(2+) serves as cofactor.

Its subcellular location is the cytoplasm. The catalysed reaction is IMP + L-aspartate + GTP = N(6)-(1,2-dicarboxyethyl)-AMP + GDP + phosphate + 2 H(+). Its pathway is purine metabolism; AMP biosynthesis via de novo pathway; AMP from IMP: step 1/2. Plays an important role in the de novo pathway of purine nucleotide biosynthesis. Catalyzes the first committed step in the biosynthesis of AMP from IMP. The sequence is that of Adenylosuccinate synthetase from Thermomicrobium roseum (strain ATCC 27502 / DSM 5159 / P-2).